The following is a 427-amino-acid chain: Transcobalamin-2 (427 aa).

Positions 1 to 18 (MELLKALLLLSGVLGALA) are cleaved as a signal peptide. Disulfide bonds link Cys21/Cys268, Cys116/Cys310, and Cys165/Cys208. Residues 152–156 (TSYYQ), His193, 193–197 (HLSVD), Asn245, Ser248, Gln292, and 395–397 (WQL) each bind cob(II)alamin.

Belongs to the eukaryotic cobalamin transport proteins family. As to quaternary structure, interacts with CD320 (via LDL-receptor class A domains).

Its subcellular location is the secreted. In terms of biological role, primary vitamin B12-binding and transport protein. Delivers cobalamin to cells. This chain is Transcobalamin-2 (Tcn2), found in Rattus norvegicus (Rat).